The primary structure comprises 483 residues: L-2-hydroxyglutarate dehydrogenase, mitochondrial (483 aa).

A mitochondrion-targeting transit peptide spans 1-67 (MKHKPETAAF…VDASKTIVRG (67 aa)).

This sequence belongs to the L2HGDH family. FAD serves as cofactor.

It is found in the mitochondrion. It carries out the reaction (S)-2-hydroxyglutarate + A = 2-oxoglutarate + AH2. Catalyzes the oxidation of (S)-2-hydroxyglutarate to 2-oxoglutarate. Is specific for the (S) enantiomer and possesses very poor activity toward (R)-2-hydroxyglutarate. Has no activity toward related 2-hydroxy acids, such as glycolate, L-lactate or D-lactate. This is L-2-hydroxyglutarate dehydrogenase, mitochondrial from Arabidopsis thaliana (Mouse-ear cress).